The chain runs to 227 residues: Prolactin-4A1 (227 aa).

A signal peptide spans 1–31 (MHLSLTPQWSSWTVLLLLVSNLLLWENTASA). 2 disulfide bridges follow: C87/C203 and C220/C227. N175 is a glycosylation site (N-linked (GlcNAc...) asparagine).

It belongs to the somatotropin/prolactin family. In terms of tissue distribution, expressed specifically in placenta. Expressed in both trophoblast giant cells and spongiotrophoblast cells.

It localises to the secreted. The chain is Prolactin-4A1 (Prl4a1) from Mus musculus (Mouse).